The chain runs to 588 residues: Peptidoglycan D,D-transpeptidase FtsI (588 aa).

Residues 19 to 39 (FISWRFALLCGCILLALAFLL) form a helical membrane-spanning segment. Ser307 (acyl-ester intermediate) is an active-site residue. Residues 578–588 (INQGEGTGGRS) constitute a propeptide that is removed on maturation.

It belongs to the transpeptidase family. FtsI subfamily.

The protein localises to the cell inner membrane. It carries out the reaction Preferential cleavage: (Ac)2-L-Lys-D-Ala-|-D-Ala. Also transpeptidation of peptidyl-alanyl moieties that are N-acyl substituents of D-alanine.. It participates in cell wall biogenesis; peptidoglycan biosynthesis. Catalyzes cross-linking of the peptidoglycan cell wall at the division septum. The sequence is that of Peptidoglycan D,D-transpeptidase FtsI from Escherichia coli O157:H7.